Here is a 218-residue protein sequence, read N- to C-terminus: Peptidyl-prolyl cis-trans isomerase FKBP7 (218 aa).

A signal peptide spans 1–19 (MNLLFRLAVFLSLWCCSDA). Residues Asn-41 and Asn-128 are each glycosylated (N-linked (GlcNAc...) asparagine). One can recognise a PPIase FKBP-type domain in the interval 49-141 (GDLLNAHYDG…MFEIELYAVT (93 aa)). EF-hand domains are found at residues 141–176 (TKGP…DFEK) and 185–218 (YQKA…HDEL). Residues Asp-154, Asp-156, Asp-158, Gln-160, Glu-165, Asp-198, Asn-200, Asp-202, and Glu-209 each coordinate Ca(2+). Positions 197-218 (NDHNGDGFISPKEYNVHQHDEL) are disordered. The Prevents secretion from ER signature appears at 215–218 (HDEL).

Glycosylated. In terms of tissue distribution, expressed at highest levels in heart, lung and testis. Weakly expressed in kidney and lymph node. Little or no expression detected in brain, thymus, spleen and liver.

Its subcellular location is the endoplasmic reticulum lumen. It carries out the reaction [protein]-peptidylproline (omega=180) = [protein]-peptidylproline (omega=0). In terms of biological role, PPIases accelerate the folding of proteins during protein synthesis. This is Peptidyl-prolyl cis-trans isomerase FKBP7 (Fkbp7) from Mus musculus (Mouse).